A 261-amino-acid polypeptide reads, in one-letter code: Polycomb group RING finger protein 1 (261 aa).

Residues 45-84 (CYLCAGYFIDATTITECLHTFCKSCIVKYLQTSKYCPMCN) form an RING-type zinc finger.

As to quaternary structure, component of a PRC1-like complex.

The protein localises to the nucleus. Its function is as follows. Component of a Polycomb group (PcG) multiprotein PRC1-like complex, a complex class required to maintain the transcriptionally repressive state of many genes, including Hox genes, throughout development. PcG PRC1 complex acts via chromatin remodeling and modification of histones; it mediates monoubiquitination of histone H2A 'Lys-119', rendering chromatin heritably changed in its expressibility. This Danio rerio (Zebrafish) protein is Polycomb group RING finger protein 1 (pcgf1).